The chain runs to 817 residues: Dolichyl-phosphate-mannose--protein mannosyltransferase 1 (817 aa).

S2 carries the post-translational modification N-acetylserine. Over 2 to 50 the chain is Cytoplasmic; the sequence is SEEKTYKRVEQDDPVPELDIKQGPVRPFIVTDPSAELASLRTMVTLKEK. A helical transmembrane segment spans residues 51–70; it reads LLVACLAVFTAVIRLHGLAW. The Lumenal portion of the chain corresponds to 71 to 135; sequence PDSVVFDEVH…DSFPSTTPYV (65 aa). Residues 136–154 form a helical membrane-spanning segment; that stretch reads LMRFFSASLGALTVILMYM. The Cytoplasmic portion of the chain corresponds to 155–179; that stretch reads TLRYSGVRMWVALMSAICFAVENSY. Residues 180–200 traverse the membrane as a helical segment; sequence VTISRYILLDAPLMFFIAAAV. At 201–234 the chain is on the lumenal side; sequence YSFKKYEMYPANSLNAYKSLLATGIALGMASSSK. Residues 235 to 259 traverse the membrane as a helical segment; sequence WVGLFTVTWVGLLCIWRLWFMIGDL. Residues 260–273 lie on the Cytoplasmic side of the membrane; sequence TKSSKSIFKVAFAK. The helical transmembrane segment at 274–291 threads the bilayer; the sequence is LAFLLGVPFALYLVFFYI. Topologically, residues 292-584 are lumenal; it reads HFQSLTLDGD…GENNRNVYLL (293 aa). 3 consecutive MIR domains span residues 324–378, 388–448, and 459–514; these read VADV…LELY, FQNL…VEID, and ERVI…VENN. N-linked (GlcNAc...) asparagine glycosylation is found at N390 and N513. Residues 585–605 traverse the membrane as a helical segment; the sequence is GNAIVWWAVTAFIGIFGLIVI. At 606 to 685 the chain is on the cytoplasmic side; it reads TELFSWQLGK…SYVFRSKRQM (80 aa). Residues 686–710 traverse the membrane as a helical segment; it reads GYAVVITFLAASVYFFKSFSPIIYG. The Lumenal portion of the chain corresponds to 711 to 817; the sequence is TPWTQELCQK…LKVEKRAVLE (107 aa). N743 carries an N-linked (GlcNAc...) asparagine glycan.

Belongs to the glycosyltransferase 39 family. PMT1 and PMT2 form a functional heterodimer. The complex interacts with endoplasmic reticulum proteins EMP24, ERV25, ERP1, ERP2, CDC48, HRD1, USA1, YOS9, ERO1, PDI1, UBR1, Cue4, DFM1 and TED1. Forms also a minor complex with PMT3.

It localises to the endoplasmic reticulum membrane. It catalyses the reaction a di-trans,poly-cis-dolichyl beta-D-mannosyl phosphate + L-seryl-[protein] = 3-O-(alpha-D-mannosyl)-L-seryl-[protein] + a di-trans,poly-cis-dolichyl phosphate + H(+). It carries out the reaction a di-trans,poly-cis-dolichyl beta-D-mannosyl phosphate + L-threonyl-[protein] = 3-O-(alpha-D-mannosyl)-L-threonyl-[protein] + a di-trans,poly-cis-dolichyl phosphate + H(+). It participates in protein modification; protein glycosylation. Protein O-mannosyltransferase involved in O-glycosylation which is essential for cell wall rigidity. Forms a heterodimeric complex with PMT2 and more rarely with PMT3 to transfer mannose from Dol-P-mannose to Ser or Thr residues on proteins. The PMT1-PMT2 complex participates in oxidative protein folding, ER-associated protein degradation (ERAD), as well as ER export. Required for incorporation of proteins in the cell wall. The chain is Dolichyl-phosphate-mannose--protein mannosyltransferase 1 from Saccharomyces cerevisiae (strain ATCC 204508 / S288c) (Baker's yeast).